Here is a 204-residue protein sequence, read N- to C-terminus: Large ribosomal subunit protein bL17 (204 aa).

The disordered stretch occupies residues 124–204; that stretch reads QAVGEAERAR…DDDGPAESKS (81 aa). Positions 128 to 142 are enriched in basic and acidic residues; the sequence is EAERARGTRFSERRK. Residues 156-191 are compositionally biased toward low complexity; that stretch reads SESPTAAAVAAQSAEEQAPVEETLTAQAAETSAATV. Positions 192 to 204 are enriched in acidic residues; that stretch reads EETDDDGPAESKS.

This sequence belongs to the bacterial ribosomal protein bL17 family. Part of the 50S ribosomal subunit. Contacts protein L32.

This is Large ribosomal subunit protein bL17 from Frankia alni (strain DSM 45986 / CECT 9034 / ACN14a).